Here is a 449-residue protein sequence, read N- to C-terminus: Uridine-cytidine kinase C (449 aa).

Position 58-65 (58-65 (GPSGAGKT)) interacts with ATP. One can recognise a CYTH domain in the interval 235-401 (NPIYILKSVK…QKSYIELYQD (167 aa)).

The protein belongs to the uridine kinase family.

It catalyses the reaction uridine + ATP = UMP + ADP + H(+). The catalysed reaction is cytidine + ATP = CMP + ADP + H(+). It functions in the pathway pyrimidine metabolism; CTP biosynthesis via salvage pathway; CTP from cytidine: step 1/3. Its pathway is pyrimidine metabolism; UMP biosynthesis via salvage pathway; UMP from uridine: step 1/1. Functionally, catalyzes the conversion of uridine into uridine monophosphate and cytidine into cytidine monophosphate in the pyrimidine salvage pathway. This is Uridine-cytidine kinase C (udkC) from Dictyostelium discoideum (Social amoeba).